A 278-amino-acid polypeptide reads, in one-letter code: HTH-type transcriptional activator RhaS (278 aa).

Residues 174-272 (NQLMAWLEDH…NWSPRDIRQG (99 aa)) form the HTH araC/xylS-type domain. DNA-binding regions (H-T-H motif) lie at residues 191–212 (EAVA…KQHT) and 239–262 (VTEI…RREF).

Binds DNA as a dimer.

It is found in the cytoplasm. Activates expression of the rhaBAD and rhaT operons. The sequence is that of HTH-type transcriptional activator RhaS from Salmonella paratyphi A (strain ATCC 9150 / SARB42).